A 142-amino-acid chain; its full sequence is Protein NIM1-INTERACTING 1 (142 aa).

Positions 47–53 (DTFFKLI) are involved in NPR1/NIM1 interaction. Positions 60–64 (RKRRR) match the Nuclear localization signal motif. Disordered stretches follow at residues 63 to 86 (RREE…RSGI) and 108 to 142 (MFVS…NLAL). Residues 110-141 (VSDHKEENTKVEQEEDQTEERNEDKALDLNLA) adopt a coiled-coil conformation. A compositionally biased stretch (basic and acidic residues) spans 111-121 (SDHKEENTKVE).

It belongs to the NPR1-interactor family. In terms of assembly, interacts with NPR1 C-terminal region.

It is found in the nucleus. In Arabidopsis thaliana (Mouse-ear cress), this protein is Protein NIM1-INTERACTING 1.